A 382-amino-acid polypeptide reads, in one-letter code: Neuropeptide Y receptor type 1 (382 aa).

Topologically, residues 1–33 (MNSTLFSKVENHSIHYNASENSPLLAFENDDCH) are extracellular. Residues Asn-2, Asn-11, and Asn-17 are each glycosylated (N-linked (GlcNAc...) asparagine). A helical membrane pass occupies residues 34 to 54 (LPLAVIFTLALAYGAVIILGV). The Cytoplasmic portion of the chain corresponds to 55 to 75 (SGNLALIIIILKQKEMRNVTN). A helical membrane pass occupies residues 76 to 96 (ILIVNLSFSDLLVAVMCLPFT). The Extracellular portion of the chain corresponds to 97–115 (FVYTLMDHWVFGETMCKLN). Cys-112 and Cys-197 are disulfide-bonded. The chain crosses the membrane as a helical span at residues 116 to 136 (PFVQCVSITVSIFSLVLIAVE). The Cytoplasmic portion of the chain corresponds to 137-153 (RHQLIINPRGWRPNNRH). A helical membrane pass occupies residues 154–174 (AYIGITVIWVLAVASSLPFVI). Residues 175-210 (YQILTDEPFQNVSLAAFKDKYVCFDKFPSDSHRLSY) are Extracellular-facing. Residues 211–231 (TTLLLVLQYFGPLCFIFICYF) traverse the membrane as a helical segment. Over 232–259 (KIYIRLKRRNNMMDKIRDSKYRSSETKR) the chain is Cytoplasmic. Residues 260–280 (INIMLLSIVVAFAVCWLPLTI) form a helical membrane-spanning segment. Residues 281 to 298 (FNTVFDWNHQIIATCNHN) lie on the Extracellular side of the membrane. Residues 299–319 (LLFLLCHLTAMISTCVNPIFY) form a helical membrane-spanning segment. Over 320–382 (GFLNKNFQRD…KISMNDNEKV (63 aa)) the chain is Cytoplasmic. Cys-337 carries the S-palmitoyl cysteine lipid modification. A phosphoserine mark is found at Ser-367 and Ser-375.

Belongs to the G-protein coupled receptor 1 family. In terms of tissue distribution, the alpha form is highly expressed in the brain, heart, kidney, spleen, skeletal muscle, and lung, whereas the beta receptor mRNA was not detected in these tissues. However, the beta form is expressed in mouse embryonic developmental stage (7 and 11 days), bone marrow cells and several hematopoietic cell lines.

Its subcellular location is the cell membrane. Functionally, receptor for neuropeptide Y and peptide YY. The protein is Neuropeptide Y receptor type 1 (Npy1r) of Mus musculus (Mouse).